Here is a 226-residue protein sequence, read N- to C-terminus: MKNLFFNKLQKKMGYLFHNNIILKQALTHRSFSSKNNERLEFLGDSILNYIISDALYNNFTNIPEGKLSQMRSYLVRGNTLAEIAREFCLGDYLILGIGEVKTGGKNRDSILSNAMEAIIGGIFLDSNINKTHEIVISWYKNRLYSMSLKNLKKDPKTRLQEYLQGNKFSLPQYYIKNITGESHNQEFTICCFIDDLKKSVIGYGKTRRKAEQSAAKQALLLFNIL.

One can recognise an RNase III domain in the interval 6 to 128; the sequence is FNKLQKKMGY…IIGGIFLDSN (123 aa). Glu41 serves as a coordination point for Mg(2+). Residue Asp45 is part of the active site. The Mg(2+) site is built by Asn114 and Glu117. Glu117 is an active-site residue. A DRBM domain is found at 155–225; that stretch reads DPKTRLQEYL…AKQALLLFNI (71 aa).

This sequence belongs to the ribonuclease III family. As to quaternary structure, homodimer. The cofactor is Mg(2+).

It localises to the cytoplasm. The catalysed reaction is Endonucleolytic cleavage to 5'-phosphomonoester.. Functionally, digests double-stranded RNA. Involved in the processing of primary rRNA transcript to yield the immediate precursors to the large and small rRNAs (23S and 16S). Processes some mRNAs, and tRNAs when they are encoded in the rRNA operon. Processes pre-crRNA and tracrRNA of type II CRISPR loci if present in the organism. The protein is Ribonuclease 3 of Wigglesworthia glossinidia brevipalpis.